Consider the following 142-residue polypeptide: Large ribosomal subunit protein uL11 (142 aa).

The protein belongs to the universal ribosomal protein uL11 family. In terms of assembly, part of the ribosomal stalk of the 50S ribosomal subunit. Interacts with L10 and the large rRNA to form the base of the stalk. L10 forms an elongated spine to which L12 dimers bind in a sequential fashion forming a multimeric L10(L12)X complex. In terms of processing, one or more lysine residues are methylated.

Functionally, forms part of the ribosomal stalk which helps the ribosome interact with GTP-bound translation factors. In Vesicomyosocius okutanii subsp. Calyptogena okutanii (strain HA), this protein is Large ribosomal subunit protein uL11.